Reading from the N-terminus, the 412-residue chain is Phospholipase A1-IIdelta (412 aa).

Alanine 2 carries the N-acetylalanine modification. The Acyl-ester intermediate role is filled by serine 238. Active-site charge relay system residues include serine 238, aspartate 297, and histidine 336.

Belongs to the AB hydrolase superfamily. Lipase family. As to expression, expressed in leaves, stems, flowers and siliques, and, at low levels, in seeds and roots (at protein level).

It is found in the cytoplasm. Its function is as follows. Acylhydrolase that catalyzes the hydrolysis of phosphatidylcholine (PC) at the sn-1 position. High activity toward PC, medium activity toward monogalactosyldiacylglycerol (MGDG) and low activity toward triacylglycerol (TAG). Confers sensitivity to UV-B radiation probably by deesterifying membrane phospholipids. The protein is Phospholipase A1-IIdelta of Arabidopsis thaliana (Mouse-ear cress).